We begin with the raw amino-acid sequence, 395 residues long: Flap endonuclease 1 (395 aa).

Positions 1-104 (MGIKHLFQVI…GELAKRTARK (104 aa)) are N-domain. Aspartate 34 contacts Mg(2+). DNA contacts are provided by arginine 47 and arginine 70. Residue aspartate 86 participates in Mg(2+) binding. Positions 102–121 (ARKAEATEAHEEAKETGTAE) are disordered. An I-domain region spans residues 122–253 (DVEKFSRRTV…NTALKLIREH (132 aa)). The Mg(2+) site is built by glutamate 158, glutamate 160, aspartate 179, and aspartate 181. Position 158 (glutamate 158) interacts with DNA. Positions 231 and 233 each coordinate DNA. Aspartate 233 lines the Mg(2+) pocket. Positions 341–349 (QQSRLEGFF) are interaction with PCNA. The segment at 348-395 (FFKPVARTDEEKASLKRKHDEKLQEQKKRKKEEAKAKKEAKAKPRGAA) is disordered. The segment covering 353 to 389 (ARTDEEKASLKRKHDEKLQEQKKRKKEEAKAKKEAKA) has biased composition (basic and acidic residues).

This sequence belongs to the XPG/RAD2 endonuclease family. FEN1 subfamily. Interacts with PCNA. Three molecules of fen1 bind to one PCNA trimer with each molecule binding to one PCNA monomer. PCNA stimulates the nuclease activity without altering cleavage specificity. Mg(2+) serves as cofactor. Phosphorylated. Phosphorylation upon DNA damage induces relocalization to the nuclear plasma.

Its subcellular location is the nucleus. The protein resides in the nucleolus. It is found in the nucleoplasm. The protein localises to the mitochondrion. In terms of biological role, structure-specific nuclease with 5'-flap endonuclease and 5'-3' exonuclease activities involved in DNA replication and repair. During DNA replication, cleaves the 5'-overhanging flap structure that is generated by displacement synthesis when DNA polymerase encounters the 5'-end of a downstream Okazaki fragment. It enters the flap from the 5'-end and then tracks to cleave the flap base, leaving a nick for ligation. Also involved in the long patch base excision repair (LP-BER) pathway, by cleaving within the apurinic/apyrimidinic (AP) site-terminated flap. Acts as a genome stabilization factor that prevents flaps from equilibrating into structures that lead to duplications and deletions. Also possesses 5'-3' exonuclease activity on nicked or gapped double-stranded DNA, and exhibits RNase H activity. Also involved in replication and repair of rDNA and in repairing mitochondrial DNA. This is Flap endonuclease 1 (fen1) from Aspergillus fumigatus (strain CBS 144.89 / FGSC A1163 / CEA10) (Neosartorya fumigata).